Reading from the N-terminus, the 86-residue chain is UPF0297 protein SH1302 (86 aa).

The protein belongs to the UPF0297 family.

The protein is UPF0297 protein SH1302 of Staphylococcus haemolyticus (strain JCSC1435).